A 58-amino-acid chain; its full sequence is UPF0337 protein OB2685 (58 aa).

Composition is skewed to basic and acidic residues over residues 1-22 (MSDG…EAKD) and 30-46 (DPQR…KGEA). The segment at 1–58 (MSDGMKDKAKAIGKKIKGEAKDQWGSATDDPQRKAEGKRDKAKGEAQDTIADAKNNNK) is disordered.

It belongs to the UPF0337 (CsbD) family.

In Oceanobacillus iheyensis (strain DSM 14371 / CIP 107618 / JCM 11309 / KCTC 3954 / HTE831), this protein is UPF0337 protein OB2685.